A 175-amino-acid polypeptide reads, in one-letter code: Co-chaperone protein HscB homolog (175 aa).

In terms of domain architecture, J spans 7 to 79 (SHFDLFHLPA…LKRATYLLSL (73 aa)).

This sequence belongs to the HscB family. In terms of assembly, interacts with HscA and stimulates its ATPase activity.

Co-chaperone involved in the maturation of iron-sulfur cluster-containing proteins. Seems to help targeting proteins to be folded toward HscA. This chain is Co-chaperone protein HscB homolog, found in Burkholderia multivorans (strain ATCC 17616 / 249).